The sequence spans 212 residues: Thymidylate kinase (212 aa).

10–17 serves as a coordination point for ATP; that stretch reads GIDGCGKT.

Belongs to the thymidylate kinase family.

It carries out the reaction dTMP + ATP = dTDP + ADP. Phosphorylation of dTMP to form dTDP in both de novo and salvage pathways of dTTP synthesis. This Prochlorococcus marinus (strain AS9601) protein is Thymidylate kinase.